The following is a 65-amino-acid chain: Neurotoxin Bot2 (65 aa).

Residues 2 to 64 form the LCN-type CS-alpha/beta domain; sequence RDAYIAQPEN…VPIRIEGKCH (63 aa). Disulfide bonds link Cys-12–Cys-63, Cys-16–Cys-36, Cys-22–Cys-46, and Cys-26–Cys-48. At Phe-65 the chain carries Phenylalanine amide.

This sequence belongs to the long (4 C-C) scorpion toxin superfamily. Sodium channel inhibitor family. Alpha subfamily. In terms of tissue distribution, expressed by the venom gland.

The protein localises to the secreted. Binds to sodium channels (Nav) and inhibits the inactivation of the activated channels, thereby blocking neuronal transmission. This is Neurotoxin Bot2 from Buthus occitanus tunetanus (Common European scorpion).